Reading from the N-terminus, the 249-residue chain is Probable transcriptional regulator ycf27 (249 aa).

The Response regulatory domain maps to 13–126 (HLLIVDDENN…ELEARIQSIL (114 aa)). A 4-aspartylphosphate modification is found at aspartate 62. The H-T-H motif DNA-binding region spans 82–100 (DIPIIMLTALEDVLDKVTG). The segment at residues 142-246 (INLFKTGSLN…ARGTGYLCRK (105 aa)) is a DNA-binding region (ompR/PhoB-type).

It localises to the plastid. It is found in the chloroplast. Its function is as follows. Probable promoter-specific protein mediating the interaction between DNA and RNA polymerase. In Cyanidium caldarium (Red alga), this protein is Probable transcriptional regulator ycf27 (ycf27).